Consider the following 366-residue polypeptide: UDP-N-acetylglucosamine--N-acetylmuramyl-(pentapeptide) pyrophosphoryl-undecaprenol N-acetylglucosamine transferase (366 aa).

Residues 10-12 (TGG), asparagine 124, arginine 166, serine 196, and glutamine 297 each bind UDP-N-acetyl-alpha-D-glucosamine.

It belongs to the glycosyltransferase 28 family. MurG subfamily.

The protein localises to the cell membrane. The catalysed reaction is di-trans,octa-cis-undecaprenyl diphospho-N-acetyl-alpha-D-muramoyl-L-alanyl-D-glutamyl-meso-2,6-diaminopimeloyl-D-alanyl-D-alanine + UDP-N-acetyl-alpha-D-glucosamine = di-trans,octa-cis-undecaprenyl diphospho-[N-acetyl-alpha-D-glucosaminyl-(1-&gt;4)]-N-acetyl-alpha-D-muramoyl-L-alanyl-D-glutamyl-meso-2,6-diaminopimeloyl-D-alanyl-D-alanine + UDP + H(+). It functions in the pathway cell wall biogenesis; peptidoglycan biosynthesis. Functionally, cell wall formation. Catalyzes the transfer of a GlcNAc subunit on undecaprenyl-pyrophosphoryl-MurNAc-pentapeptide (lipid intermediate I) to form undecaprenyl-pyrophosphoryl-MurNAc-(pentapeptide)GlcNAc (lipid intermediate II). The polypeptide is UDP-N-acetylglucosamine--N-acetylmuramyl-(pentapeptide) pyrophosphoryl-undecaprenol N-acetylglucosamine transferase (Alkaliphilus metalliredigens (strain QYMF)).